The primary structure comprises 273 residues: Peroxiredoxin-4 (273 aa).

A signal peptide spans 1 to 40; sequence METWSKLLDGTTPSRRWRKLVLLLPPLLLFLLQTEALQGL. One can recognise a Thioredoxin domain in the interval 81–239; the sequence is AKISKPAPYW…TLRLVQAFQY (159 aa). Cys-126 functions as the Cysteine sulfenic acid (-SOH) intermediate in the catalytic mechanism.

This sequence belongs to the peroxiredoxin family. AhpC/Prx1 subfamily. As to quaternary structure, homodimer; disulfide-linked, upon oxidation. 5 homodimers assemble to form a ring-like decamer. In terms of processing, the enzyme can be inactivated by further oxidation of the cysteine sulfenic acid (C(P)-SOH) to sulphinic acid (C(P)-SO2H) and sulphonic acid (C(P)-SO3H) instead of its condensation to a disulfide bond.

Its subcellular location is the cytoplasm. It is found in the endoplasmic reticulum. The protein resides in the secreted. It catalyses the reaction a hydroperoxide + [thioredoxin]-dithiol = an alcohol + [thioredoxin]-disulfide + H2O. Thiol-specific peroxidase that catalyzes the reduction of hydrogen peroxide and organic hydroperoxides to water and alcohols, respectively. Plays a role in cell protection against oxidative stress by detoxifying peroxides and as sensor of hydrogen peroxide-mediated signaling events. Regulates the activation of NF-kappa-B in the cytosol by a modulation of I-kappa-B-alpha phosphorylation. This Rattus norvegicus (Rat) protein is Peroxiredoxin-4 (Prdx4).